We begin with the raw amino-acid sequence, 265 residues long: Homeobox protein engrailed-2-B (265 aa).

Composition is skewed to basic and acidic residues over residues 1 to 12 and 102 to 115; these read MEENEQNNREVE and GEKKSDLAMEETLK. Disordered regions lie at residues 1-38, 60-138, and 156-182; these read MEENEQNNREVEPQQESGEESNRGILHQAPPGNHQPHH, INHQ…SSKA, and DRPSSGPRSRKPKKKSVSKEDKRPRTA. The segment covering 122-136 has biased composition (low complexity); it reads DHSLSSDSDSSQASS. Positions 176–235 form a DNA-binding region, homeobox; it reads DKRPRTAFTAEQLQRLKAEFQTNRYLTEQRRQSLAQELGLNESQIKIWFQNKRAKIKKST.

This sequence belongs to the engrailed homeobox family.

It is found in the nucleus. This Xenopus laevis (African clawed frog) protein is Homeobox protein engrailed-2-B (en2-b).